The following is a 183-amino-acid chain: tRNA-splicing endonuclease (183 aa).

Active-site residues include tyrosine 120, histidine 128, and lysine 159.

This sequence belongs to the tRNA-intron endonuclease family. Archaeal short subfamily. Homotetramer; although the tetramer contains four active sites, only two participate in the cleavage. Therefore, it should be considered as a dimer of dimers.

It catalyses the reaction pretRNA = a 3'-half-tRNA molecule with a 5'-OH end + a 5'-half-tRNA molecule with a 2',3'-cyclic phosphate end + an intron with a 2',3'-cyclic phosphate and a 5'-hydroxyl terminus.. Functionally, endonuclease that removes tRNA introns. Cleaves pre-tRNA at the 5'- and 3'-splice sites to release the intron. The products are an intron and two tRNA half-molecules bearing 2',3' cyclic phosphate and 5'-OH termini. Recognizes a pseudosymmetric substrate in which 2 bulged loops of 3 bases are separated by a stem of 4 bp. The polypeptide is tRNA-splicing endonuclease (Pyrobaculum islandicum (strain DSM 4184 / JCM 9189 / GEO3)).